A 480-amino-acid polypeptide reads, in one-letter code: Sialyltransferase-like protein 5 (480 aa).

The Cytoplasmic segment spans residues 1–17; it reads MARAPPPLSSLPPPPRR. A signal-anchor for type II membrane protein membrane pass occupies residues 18-38; the sequence is PTVVLLLGLALAFCLAVLSIQ. Residues 39-480 are Lumenal-facing; the sequence is SSFFTAPRLA…VCVRHERSSS (442 aa). Asn98, Asn130, Asn165, and Asn321 each carry an N-linked (GlcNAc...) asparagine glycan.

Belongs to the glycosyltransferase 29 family.

The protein localises to the golgi apparatus membrane. Its function is as follows. May possess sialyltransferase-like activity in vitro. The chain is Sialyltransferase-like protein 5 from Oryza sativa subsp. japonica (Rice).